Consider the following 421-residue polypeptide: MANVKINNISARQILDSRGYPTIEVQITLSNNVFAKASIPSGASVGKFEAVELRDHDTNYYHGYGVTKAVNLINSEIGQKIIKLETLDQEKIDNALIEIDGTNNKSRVGANSILAISLAVAKAAASTLNIPLYQYLGGITAKILPTPLINIINGGMHADNNLDFHEFMIIPHGANSFEDAIRMSSEVFHTLKKILKQKQYNTNVGDEGGFAPNIKDNTEVFDIIIDAIEKSGYKVYKDFSLGLDVAASTFYKNEKYKFSDYQFSTHELVEYYKNIVTQYPIISLEDPIAEEDTLGWKMITKELGDKIQIVGDDLFVTNCKLIKNGIDNNMANAVLIKPNQIGTLTETLNAIRLAQKNNYKVILSHRSGETNDTTISHIAVAVNCGQIKTGSLSRSERLAKYNELLYIEKLLNTSAIYQGML.

Residue Glu207 is the Proton donor of the active site. The Mg(2+) site is built by Asp244, Glu285, and Asp312. The active-site Proton acceptor is the Lys337. Residues Lys337, Arg366, Ser367, and Lys388 each contribute to the (2R)-2-phosphoglycerate site.

It belongs to the enolase family. Mg(2+) serves as cofactor.

The protein resides in the cytoplasm. Its subcellular location is the secreted. It localises to the cell surface. It catalyses the reaction (2R)-2-phosphoglycerate = phosphoenolpyruvate + H2O. The protein operates within carbohydrate degradation; glycolysis; pyruvate from D-glyceraldehyde 3-phosphate: step 4/5. Catalyzes the reversible conversion of 2-phosphoglycerate (2-PG) into phosphoenolpyruvate (PEP). It is essential for the degradation of carbohydrates via glycolysis. This Ehrlichia ruminantium (strain Gardel) protein is Enolase.